Consider the following 95-residue polypeptide: DNA-directed RNA polymerase subunit Rpo6 (95 aa).

Belongs to the archaeal Rpo6/eukaryotic RPB6 RNA polymerase subunit family. Part of the 13-subunit RNA polymerase complex.

It is found in the cytoplasm. The enzyme catalyses RNA(n) + a ribonucleoside 5'-triphosphate = RNA(n+1) + diphosphate. Functionally, DNA-dependent RNA polymerase (RNAP) catalyzes the transcription of DNA into RNA using the four ribonucleoside triphosphates as substrates. This Saccharolobus solfataricus (strain ATCC 35092 / DSM 1617 / JCM 11322 / P2) (Sulfolobus solfataricus) protein is DNA-directed RNA polymerase subunit Rpo6.